The primary structure comprises 622 residues: DNA mismatch repair protein MutL (622 aa).

The span at 399–414 (SSQNFHPDENDYRAEE) shows a compositional bias: basic and acidic residues. Residues 399–422 (SSQNFHPDENDYRAEEASPAEENP) form a disordered region.

It belongs to the DNA mismatch repair MutL/HexB family.

In terms of biological role, this protein is involved in the repair of mismatches in DNA. It is required for dam-dependent methyl-directed DNA mismatch repair. May act as a 'molecular matchmaker', a protein that promotes the formation of a stable complex between two or more DNA-binding proteins in an ATP-dependent manner without itself being part of a final effector complex. This chain is DNA mismatch repair protein MutL, found in Phocaeicola vulgatus (strain ATCC 8482 / DSM 1447 / JCM 5826 / CCUG 4940 / NBRC 14291 / NCTC 11154) (Bacteroides vulgatus).